The primary structure comprises 130 residues: Zinc finger A20 and AN1 domain-containing stress-associated protein 10 (130 aa).

The A20-type zinc-finger motif lies at E4–S38. C10, C14, C26, C29, C71, C74, C85, C87, C92, H95, H101, and C103 together coordinate Zn(2+). The segment at P65–G111 adopts an AN1-type zinc-finger fold.

Functionally, may be involved in environmental stress response. The sequence is that of Zinc finger A20 and AN1 domain-containing stress-associated protein 10 (SAP10) from Arabidopsis thaliana (Mouse-ear cress).